The primary structure comprises 490 residues: Bifunctional protein HldE (490 aa).

The interval 1–330 (MSRFDTLLQS…RKILPHASLA (330 aa)) is ribokinase. Residue 205-208 (NRKE) coordinates ATP. The active site involves aspartate 275. The segment at 358–490 (FTNGCFDILH…LVEKAREGTT (133 aa)) is cytidylyltransferase.

In the N-terminal section; belongs to the carbohydrate kinase PfkB family. It in the C-terminal section; belongs to the cytidylyltransferase family. As to quaternary structure, homodimer.

The catalysed reaction is D-glycero-beta-D-manno-heptose 7-phosphate + ATP = D-glycero-beta-D-manno-heptose 1,7-bisphosphate + ADP + H(+). It catalyses the reaction D-glycero-beta-D-manno-heptose 1-phosphate + ATP + H(+) = ADP-D-glycero-beta-D-manno-heptose + diphosphate. It functions in the pathway nucleotide-sugar biosynthesis; ADP-L-glycero-beta-D-manno-heptose biosynthesis; ADP-L-glycero-beta-D-manno-heptose from D-glycero-beta-D-manno-heptose 7-phosphate: step 1/4. The protein operates within nucleotide-sugar biosynthesis; ADP-L-glycero-beta-D-manno-heptose biosynthesis; ADP-L-glycero-beta-D-manno-heptose from D-glycero-beta-D-manno-heptose 7-phosphate: step 3/4. In terms of biological role, catalyzes the phosphorylation of D-glycero-D-manno-heptose 7-phosphate at the C-1 position to selectively form D-glycero-beta-D-manno-heptose-1,7-bisphosphate. Functionally, catalyzes the ADP transfer from ATP to D-glycero-beta-D-manno-heptose 1-phosphate, yielding ADP-D-glycero-beta-D-manno-heptose. This is Bifunctional protein HldE from Rhodopseudomonas palustris (strain BisB5).